We begin with the raw amino-acid sequence, 388 residues long: Protein TsgA homolog (388 aa).

12 helical membrane passes run 11–31, 50–70, 77–97, 101–121, 133–153, 160–180, 206–226, 244–264, 268–288, 298–318, 332–352, and 360–380; these read WISFLSYAFTGALVVVTGMIM, TFLNAGILVSIFINSWLIEII, IFSFILTIIAVIGIVLCNSIF, INMFILGLVSGITMSIGTFII, LLLLTDSFFSMSGMIFPIVTA, IIWYWSYICIGAIYLLIFLLT, VFLLSISALLYILGQLGFISW, SLVSGFWMSYMLGMWFFSFII, NLYRMFIFLTSMSTILMYCFI, YIIISLGFFSSAIYTIIITLA, LILLFGTIGTFLTFIITSPIV, and TLISSNILYGIVFFLSILIYF.

This sequence belongs to the major facilitator superfamily. TsgA family.

The protein resides in the cell membrane. The chain is Protein TsgA homolog from Buchnera aphidicola subsp. Acyrthosiphon pisum (strain 5A).